Reading from the N-terminus, the 246-residue chain is MyoD family inhibitor domain-containing protein (246 aa).

Disordered stretches follow at residues 1–93 (MSQE…EEET) and 134–164 (KIQS…ASPE). The Extracellular portion of the chain corresponds to 1-170 (MSQEREPFSP…ASPEDGCVHC (170 aa)). Polar residues predominate over residues 63–87 (EDNSNSQPIKAQPQRLPQPNTSALE). The 173-residue stretch at 74–246 (QPQRLPQPNT…MECCGICFPS (173 aa)) folds into the MDFI domain. Residues 171-188 (ILTCLFCEFLTLCNIVVG) traverse the membrane as a helical segment. The Cytoplasmic segment spans residues 189-246 (QASCGICTSEACCCCCTEEMGDDCNCPCDMDCGIMDACCESSDCLEICMECCGICFPS).

Belongs to the MDFI family. As to expression, expressed broadly at a low level in the early embryo.

The protein resides in the cytoplasm. Its subcellular location is the cell membrane. It is found in the secreted. Functionally, required to control the activity of various transcription factors through their sequestration in the cytoplasm. Retains nuclear Zic proteins in the cytoplasm and inhibits their transcriptional activation. Required for dorsoanterior development. Necessary for siamois to activate downstream target genes, including gsc, during execution of the dorsal organizer program. Also regulates the transcriptional activity of TCF7L1/TCF3 by interacting directly with TCF7L1/TCF3 and preventing it from binding DNA. Involved in the development of lymphatic vessel valves. It is required to promote lymphatic endothelial cell migration, in a process that involves down-regulation of integrin beta 1 activation and control of cell adhesion to the extracellular matrix. The polypeptide is MyoD family inhibitor domain-containing protein (Xenopus laevis (African clawed frog)).